A 251-amino-acid chain; its full sequence is Hydroxyacylglutathione hydrolase (251 aa).

Zn(2+) is bound by residues histidine 53, histidine 55, aspartate 57, histidine 58, histidine 110, aspartate 127, and histidine 165.

This sequence belongs to the metallo-beta-lactamase superfamily. Glyoxalase II family. In terms of assembly, monomer. It depends on Zn(2+) as a cofactor.

It catalyses the reaction an S-(2-hydroxyacyl)glutathione + H2O = a 2-hydroxy carboxylate + glutathione + H(+). It functions in the pathway secondary metabolite metabolism; methylglyoxal degradation; (R)-lactate from methylglyoxal: step 2/2. Thiolesterase that catalyzes the hydrolysis of S-D-lactoyl-glutathione to form glutathione and D-lactic acid. In Blochmanniella pennsylvanica (strain BPEN), this protein is Hydroxyacylglutathione hydrolase.